Here is a 236-residue protein sequence, read N- to C-terminus: Protein Thf1 (236 aa).

A coiled-coil region spans residues 180–220 (PVEKMQKDLEQYRSNLEKMTQARKTLEDIVAAERKRRQQNA). Residues 206 to 236 (EDIVAAERKRRQQNAAPDRSPESASATEAPN) form a disordered region. Residues 227–236 (ESASATEAPN) are compositionally biased toward polar residues.

Belongs to the THF1 family.

Functionally, may be involved in photosynthetic membrane biogenesis. The polypeptide is Protein Thf1 (Cyanothece sp. (strain PCC 7425 / ATCC 29141)).